A 48-amino-acid polypeptide reads, in one-letter code: M-oxotoxin-Ot1c (48 aa).

The protein resides in the secreted. It localises to the target cell membrane. In terms of biological role, disrupts cell membranes, particularly those rich in phosphocholine, through formation of pores. Has antimicrobial activity, hemolytic activity and insecticidal activity. This is M-oxotoxin-Ot1c from Oxyopes takobius (Lynx spider).